We begin with the raw amino-acid sequence, 943 residues long: Protein translocase subunit SecA (943 aa).

Residues Gln90, 108-112, and Asp509 each bind ATP; that span reads GEGKT. The tract at residues 535–560 is disordered; it reads PNNEHKPPIPKQRSSKSKGGFSSKVG. Residues 551–560 show a composition bias toward low complexity; that stretch reads SKGGFSSKVG.

This sequence belongs to the SecA family. In terms of assembly, monomer and homodimer. Part of the essential Sec protein translocation apparatus which comprises SecA, SecYEG and auxiliary proteins SecDF. Other proteins may also be involved.

The protein localises to the cell inner membrane. Its subcellular location is the cellular thylakoid membrane. It localises to the cytoplasm. It carries out the reaction ATP + H2O + cellular proteinSide 1 = ADP + phosphate + cellular proteinSide 2.. Its function is as follows. Part of the Sec protein translocase complex. Interacts with the SecYEG preprotein conducting channel. Has a central role in coupling the hydrolysis of ATP to the transfer of proteins into and across the cell membrane, serving as an ATP-driven molecular motor driving the stepwise translocation of polypeptide chains across the membrane. In terms of biological role, probably participates in protein translocation into and across both the cytoplasmic and thylakoid membranes in cyanobacterial cells. The chain is Protein translocase subunit SecA from Prochlorococcus marinus (strain MIT 9312).